Reading from the N-terminus, the 89-residue chain is Small ribosomal subunit protein bS20 (89 aa).

2 stretches are compositionally biased toward basic residues: residues 1–10 and 17–29; these read MANIKSKIKS and ARKRNSMIKSRVK. Positions 1 to 29 are disordered; it reads MANIKSKIKSIKTMEKARKRNSMIKSRVK.

This sequence belongs to the bacterial ribosomal protein bS20 family.

Binds directly to 16S ribosomal RNA. This chain is Small ribosomal subunit protein bS20, found in Mycoplasmopsis pulmonis (strain UAB CTIP) (Mycoplasma pulmonis).